The primary structure comprises 76 residues: Large ribosomal subunit protein eL20 (76 aa).

This sequence belongs to the eukaryotic ribosomal protein eL20 family. In terms of assembly, part of the 50S ribosomal subunit. Binds 23S rRNA.

This Methanococcus maripaludis (strain C7 / ATCC BAA-1331) protein is Large ribosomal subunit protein eL20.